We begin with the raw amino-acid sequence, 485 residues long: ATP synthase subunit beta (485 aa).

The disordered stretch occupies residues 1–20 (MSTTKTTKMTVKTGSKGTSG). Position 170-177 (170-177 (GGAGVGKT)) interacts with ATP.

This sequence belongs to the ATPase alpha/beta chains family. As to quaternary structure, F-type ATPases have 2 components, CF(1) - the catalytic core - and CF(0) - the membrane proton channel. CF(1) has five subunits: alpha(3), beta(3), gamma(1), delta(1), epsilon(1). CF(0) has three main subunits: a(1), b(2) and c(9-12). The alpha and beta chains form an alternating ring which encloses part of the gamma chain. CF(1) is attached to CF(0) by a central stalk formed by the gamma and epsilon chains, while a peripheral stalk is formed by the delta and b chains.

Its subcellular location is the cell membrane. The enzyme catalyses ATP + H2O + 4 H(+)(in) = ADP + phosphate + 5 H(+)(out). Functionally, produces ATP from ADP in the presence of a proton gradient across the membrane. The catalytic sites are hosted primarily by the beta subunits. The protein is ATP synthase subunit beta of Mycobacterium leprae (strain TN).